Reading from the N-terminus, the 148-residue chain is Large-conductance mechanosensitive channel (148 aa).

The next 2 membrane-spanning stretches (helical) occupy residues 16–36 (VMDL…VNSI) and 89–109 (GSFI…FLMV).

This sequence belongs to the MscL family. As to quaternary structure, homopentamer.

It is found in the cell inner membrane. Functionally, channel that opens in response to stretch forces in the membrane lipid bilayer. May participate in the regulation of osmotic pressure changes within the cell. The sequence is that of Large-conductance mechanosensitive channel from Paraburkholderia phytofirmans (strain DSM 17436 / LMG 22146 / PsJN) (Burkholderia phytofirmans).